A 451-amino-acid polypeptide reads, in one-letter code: Probable gamma-glutamyl phosphate reductase (451 aa).

The protein belongs to the gamma-glutamyl phosphate reductase family.

The enzyme catalyses L-glutamate 5-semialdehyde + phosphate + NADP(+) = L-glutamyl 5-phosphate + NADPH + H(+). Its pathway is amino-acid biosynthesis; L-proline biosynthesis; L-glutamate 5-semialdehyde from L-glutamate: step 2/2. In terms of biological role, catalyzes the NADPH dependent reduction of L-gamma-glutamyl 5-phosphate into L-glutamate 5-semialdehyde and phosphate. The product spontaneously undergoes cyclization to form 1-pyrroline-5-carboxylate. The polypeptide is Probable gamma-glutamyl phosphate reductase (pro1) (Schizosaccharomyces pombe (strain 972 / ATCC 24843) (Fission yeast)).